Consider the following 280-residue polypeptide: uncharacterized protein (280 aa).

Residues 1-26 (MNILIKSAVKNFIVFSTALYTSFSFA) form the signal peptide.

It to E.coli YibQ.

This is an uncharacterized protein from Haemophilus influenzae (strain ATCC 51907 / DSM 11121 / KW20 / Rd).